A 325-amino-acid polypeptide reads, in one-letter code: MQNSLLKPRIIEVEVLGAGHAKVVMEPFERGYGHTLGNALRRVLLSSMVGYAPTEVTIAGVVHEYSSLDGVQEDVVDLLLNLKGVVFKLHNRDDVTLTLKKEGEGAVLASDIELPHDVELVNPDHVIAHLTAGGKLDMQIKVEKGRGYVPGNVRRLSEDTNKTIGRIILDASFSPVRRVSYAVESARVEQRTDLDKLVINIETNGVITPEEAIRQSARVLVDQLNVFAALEGTEAPADAPSRAPAVDPILLRPVDDLELTVRSANCLKAENIYYIGDLIQRSENELLKTPNLGRKSLNEIKEVLASRGLTLGMKLENWPPAGLEK.

Residues 1–231 (MQNSLLKPRI…DQLNVFAALE (231 aa)) are alpha N-terminal domain (alpha-NTD). Residues 246 to 325 (VDPILLRPVD…ENWPPAGLEK (80 aa)) form an alpha C-terminal domain (alpha-CTD) region.

The protein belongs to the RNA polymerase alpha chain family. Homodimer. The RNAP catalytic core consists of 2 alpha, 1 beta, 1 beta' and 1 omega subunit. When a sigma factor is associated with the core the holoenzyme is formed, which can initiate transcription.

The catalysed reaction is RNA(n) + a ribonucleoside 5'-triphosphate = RNA(n+1) + diphosphate. DNA-dependent RNA polymerase catalyzes the transcription of DNA into RNA using the four ribonucleoside triphosphates as substrates. This chain is DNA-directed RNA polymerase subunit alpha, found in Herminiimonas arsenicoxydans.